The chain runs to 300 residues: Ribosomal protein bS6--L-glutamate ligase (300 aa).

One can recognise an ATP-grasp domain in the interval 104-287 (MQLLARQGID…IAGKMIRWIE (184 aa)). Residues lysine 141, 178 to 179 (EY), aspartate 187, and 211 to 213 (RSN) each bind ATP. Residues aspartate 248, glutamate 260, and asparagine 262 each coordinate Mg(2+). Mn(2+) contacts are provided by aspartate 248, glutamate 260, and asparagine 262.

This sequence belongs to the RimK family. It depends on Mg(2+) as a cofactor. Mn(2+) is required as a cofactor.

Functionally, an L-glutamate ligase that catalyzes the ATP-dependent post-translational addition of glutamate residues to the C-terminus of ribosomal protein bS6 (RpsF). Is also able to catalyze the synthesis of poly-alpha-glutamate in vitro, via ATP hydrolysis from unprotected glutamate as substrate. The number of glutamate residues added to either RpsF or to poly-alpha-glutamate changes with pH. This chain is Ribosomal protein bS6--L-glutamate ligase, found in Escherichia coli O7:K1 (strain IAI39 / ExPEC).